We begin with the raw amino-acid sequence, 357 residues long: Isoflavone 7-O-methyltransferase (357 aa).

Residues 200-203 (VGGG), Asp-224, 224-225 (DR), 244-245 (DM), and Lys-258 contribute to the S-adenosyl-L-methionine site. Catalysis depends on His-262, which acts as the Proton acceptor.

This sequence belongs to the class I-like SAM-binding methyltransferase superfamily. Cation-independent O-methyltransferase family. COMT subfamily.

It carries out the reaction a 7-hydroxyisoflavone + S-adenosyl-L-methionine = a 7-methoxyisoflavone + S-adenosyl-L-homocysteine + H(+). 7-O-methyltransferase involved in the biosynthesis of isoformononetin. Can use daidzein as substrate, but not medicarpin or 2,7,4'-trihydroxyisoflavanone. The protein is Isoflavone 7-O-methyltransferase (D7OMT) of Glycyrrhiza echinata (Licorice).